Reading from the N-terminus, the 32-residue chain is Hyaluronidase-Pk1a (32 aa).

A glycan (N-linked (GlcNAc...) asparagine) is linked at asparagine 23.

This sequence belongs to the glycosyl hydrolase 56 family. In terms of tissue distribution, expressed by the venom gland.

The protein localises to the secreted. The enzyme catalyses Random hydrolysis of (1-&gt;4)-linkages between N-acetyl-beta-D-glucosamine and D-glucuronate residues in hyaluronate.. Hydrolyzes high molecular weight hyaluronic acid to produce small oligosaccharides. This Phoneutria keyserlingi (Brazilian wandering spider) protein is Hyaluronidase-Pk1a.